The primary structure comprises 399 residues: Elongation factor Tu (399 aa).

A tr-type G domain is found at 10 to 209 (KPHVNIGTIG…KVDEYIPTPV (200 aa)). A G1 region spans residues 19–26 (GHVDHGKT). Position 19-26 (19-26 (GHVDHGKT)) interacts with GTP. Thr26 is a binding site for Mg(2+). The tract at residues 60–64 (GITIA) is G2. The interval 81-84 (DCPG) is G3. GTP-binding positions include 81–85 (DCPGH) and 136–139 (NKAD). The tract at residues 136 to 139 (NKAD) is G4. The tract at residues 174-176 (SAL) is G5.

It belongs to the TRAFAC class translation factor GTPase superfamily. Classic translation factor GTPase family. EF-Tu/EF-1A subfamily. As to quaternary structure, monomer.

Its subcellular location is the cytoplasm. The enzyme catalyses GTP + H2O = GDP + phosphate + H(+). Its function is as follows. GTP hydrolase that promotes the GTP-dependent binding of aminoacyl-tRNA to the A-site of ribosomes during protein biosynthesis. The chain is Elongation factor Tu from Campylobacter curvus (strain 525.92).